Consider the following 294-residue polypeptide: UDP-3-O-acyl-N-acetylglucosamine deacetylase (294 aa).

Zn(2+) contacts are provided by H75, H232, and D236. The active-site Proton donor is the H259.

It belongs to the LpxC family. Zn(2+) is required as a cofactor.

It carries out the reaction a UDP-3-O-[(3R)-3-hydroxyacyl]-N-acetyl-alpha-D-glucosamine + H2O = a UDP-3-O-[(3R)-3-hydroxyacyl]-alpha-D-glucosamine + acetate. Its pathway is glycolipid biosynthesis; lipid IV(A) biosynthesis; lipid IV(A) from (3R)-3-hydroxytetradecanoyl-[acyl-carrier-protein] and UDP-N-acetyl-alpha-D-glucosamine: step 2/6. Functionally, catalyzes the hydrolysis of UDP-3-O-myristoyl-N-acetylglucosamine to form UDP-3-O-myristoylglucosamine and acetate, the committed step in lipid A biosynthesis. This chain is UDP-3-O-acyl-N-acetylglucosamine deacetylase, found in Campylobacter jejuni subsp. jejuni serotype O:23/36 (strain 81-176).